A 145-amino-acid polypeptide reads, in one-letter code: Superoxide dismutase [Mn/Fe] (145 aa).

Positions 10 and 64 each coordinate Fe(3+). Mn(2+) is bound by residues His-10 and His-64.

Belongs to the iron/manganese superoxide dismutase family. Requires Mn(2+) as cofactor. Fe(3+) is required as a cofactor.

It carries out the reaction 2 superoxide + 2 H(+) = H2O2 + O2. Functionally, destroys superoxide anion radicals which are normally produced within the cells and which are toxic to biological systems. Catalyzes the dismutation of superoxide anion radicals into O2 and H2O2 by successive reduction and oxidation of the transition metal ion at the active site. In Streptococcus iniae (Streptococcus shiloi), this protein is Superoxide dismutase [Mn/Fe] (sodA).